We begin with the raw amino-acid sequence, 140 residues long: Large ribosomal subunit protein uL16 (140 aa).

Belongs to the universal ribosomal protein uL16 family. As to quaternary structure, part of the 50S ribosomal subunit.

Binds 23S rRNA and is also seen to make contacts with the A and possibly P site tRNAs. The sequence is that of Large ribosomal subunit protein uL16 from Geotalea uraniireducens (strain Rf4) (Geobacter uraniireducens).